The chain runs to 94 residues: Co-chaperonin GroES (94 aa).

The protein belongs to the GroES chaperonin family. Heptamer of 7 subunits arranged in a ring. Interacts with the chaperonin GroEL.

Its subcellular location is the cytoplasm. Functionally, together with the chaperonin GroEL, plays an essential role in assisting protein folding. The GroEL-GroES system forms a nano-cage that allows encapsulation of the non-native substrate proteins and provides a physical environment optimized to promote and accelerate protein folding. GroES binds to the apical surface of the GroEL ring, thereby capping the opening of the GroEL channel. The polypeptide is Co-chaperonin GroES (Streptococcus pneumoniae (strain 70585)).